The chain runs to 219 residues: Small ribosomal subunit protein uS3 (219 aa).

Residues 38-106 (IRKFIEKRLV…RVHINIVEIK (69 aa)) form the KH type-2 domain.

The protein belongs to the universal ribosomal protein uS3 family. In terms of assembly, part of the 30S ribosomal subunit. Forms a tight complex with proteins S10 and S14.

Binds the lower part of the 30S subunit head. Binds mRNA in the 70S ribosome, positioning it for translation. This chain is Small ribosomal subunit protein uS3, found in Levilactobacillus brevis (strain ATCC 367 / BCRC 12310 / CIP 105137 / JCM 1170 / LMG 11437 / NCIMB 947 / NCTC 947) (Lactobacillus brevis).